The sequence spans 30 residues: Dicynthaurin (30 aa).

The residue at position 30 (T30) is a Threonine amide.

As to quaternary structure, homodimer.

It is found in the secreted. In terms of biological role, shows antibacterial activity against both Gram-positive and Gram-negative bacteria. Its antimicrobial activity is optimal at NaCl concentrations below 100 mM, suggesting that the antimicrobial actions of this peptide may take place intracellularly rather than extracellularly. Has no activity against the fungus C.albicans. Has modest hemolytic activity. This chain is Dicynthaurin, found in Halocynthia aurantium (Sea peach).